The sequence spans 408 residues: LL-diaminopimelate aminotransferase (408 aa).

Positions 15 and 42 each coordinate substrate. Pyridoxal 5'-phosphate contacts are provided by residues Tyr-72, 108-109 (SK), Tyr-132, Asn-187, Tyr-218, and 246-248 (SFS). Substrate-binding residues include Lys-109, Tyr-132, and Asn-187. Lys-249 carries the N6-(pyridoxal phosphate)lysine modification. Arg-257 and Asn-292 together coordinate pyridoxal 5'-phosphate. The substrate site is built by Asn-292 and Arg-388.

This sequence belongs to the class-I pyridoxal-phosphate-dependent aminotransferase family. LL-diaminopimelate aminotransferase subfamily. In terms of assembly, homodimer. Pyridoxal 5'-phosphate serves as cofactor.

It carries out the reaction (2S,6S)-2,6-diaminopimelate + 2-oxoglutarate = (S)-2,3,4,5-tetrahydrodipicolinate + L-glutamate + H2O + H(+). It functions in the pathway amino-acid biosynthesis; L-lysine biosynthesis via DAP pathway; LL-2,6-diaminopimelate from (S)-tetrahydrodipicolinate (aminotransferase route): step 1/1. Functionally, involved in the synthesis of meso-diaminopimelate (m-DAP or DL-DAP), required for both lysine and peptidoglycan biosynthesis. Catalyzes the direct conversion of tetrahydrodipicolinate to LL-diaminopimelate. The polypeptide is LL-diaminopimelate aminotransferase (Prochlorococcus marinus (strain AS9601)).